The following is a 406-amino-acid chain: MSYEKLLERFLTYVKINTRSNPNSTQTPTTQSQVDFALTVLKPEMEAIGLKDVHYLPSNGYLVGTLPATSDRLRHKIGFISHMDTADFNAENITPQIVDYKGGDIELGDSGYILSPKDFPNLNNYHGQTLITTDGKTLLGADDKSGIAEIMTAMEYLASHPEIEHCEIRVGFGPDEEIGIGADKFDVKDFDVDFAYTVDGGPLGELQYETFSAAGLELTFEGRNVHPGTAKNQMINALQLAMDFHSQLPENERPEQTDGYQGFYHLYDLSGTVDQAKSSYIIRDFEEVDFLKRKHLAQDIADNMNEALQSERVKVKLYDQYYNMKKVIEKDMTPINIAKEVMEELDIKPIIEPIRGGTDGSKISFMGIPTPNLFAGGENMHGRFEFVSLQTMEKAVDVILGIVAKD.

A Zn(2+)-binding site is contributed by histidine 82. Residue aspartate 84 is part of the active site. Aspartate 142 is a binding site for Zn(2+). Glutamate 176 serves as the catalytic Proton acceptor. Zn(2+) contacts are provided by glutamate 177, aspartate 199, and histidine 381.

Belongs to the peptidase M20B family. Zn(2+) is required as a cofactor.

It is found in the cytoplasm. It carries out the reaction Release of the N-terminal residue from a tripeptide.. Cleaves the N-terminal amino acid of tripeptides. This chain is Peptidase T, found in Streptococcus agalactiae serotype V (strain ATCC BAA-611 / 2603 V/R).